Consider the following 476-residue polypeptide: Aspartyl/glutamyl-tRNA(Asn/Gln) amidotransferase subunit B (476 aa).

Belongs to the GatB/GatE family. GatB subfamily. In terms of assembly, heterotrimer of A, B and C subunits.

The enzyme catalyses L-glutamyl-tRNA(Gln) + L-glutamine + ATP + H2O = L-glutaminyl-tRNA(Gln) + L-glutamate + ADP + phosphate + H(+). It catalyses the reaction L-aspartyl-tRNA(Asn) + L-glutamine + ATP + H2O = L-asparaginyl-tRNA(Asn) + L-glutamate + ADP + phosphate + 2 H(+). Allows the formation of correctly charged Asn-tRNA(Asn) or Gln-tRNA(Gln) through the transamidation of misacylated Asp-tRNA(Asn) or Glu-tRNA(Gln) in organisms which lack either or both of asparaginyl-tRNA or glutaminyl-tRNA synthetases. The reaction takes place in the presence of glutamine and ATP through an activated phospho-Asp-tRNA(Asn) or phospho-Glu-tRNA(Gln). The sequence is that of Aspartyl/glutamyl-tRNA(Asn/Gln) amidotransferase subunit B from Clostridium botulinum (strain Alaska E43 / Type E3).